Reading from the N-terminus, the 944-residue chain is Lactoferrin-binding protein A (944 aa).

The signal sequence occupies residues 1–27 (MNKKHGFSLTLTALAIAAAFPSYAANP). One can recognise a TBDR plug domain in the interval 52–178 (RRSKEATGLG…LGGAVAFRTK (127 aa)). The 756-residue stretch at 189–944 (SWGIQAKTAY…NFSLALEMKF (756 aa)) folds into the TBDR beta-barrel domain. The short motif at 927–944 (GRYAAPGRNFSLALEMKF) is the TonB C-terminal box element.

The protein belongs to the TonB-dependent receptor family.

The protein resides in the cell outer membrane. Functionally, unknown. May be an iron-siderophore receptor. The protein is Lactoferrin-binding protein A (lbpA) of Neisseria meningitidis serogroup A / serotype 4A (strain DSM 15465 / Z2491).